The chain runs to 376 residues: Chaperone protein DnaJ (376 aa).

Residues 4-69 (DFYETLGVQK…QKRAAYDRFG (66 aa)) enclose the J domain. The CR-type zinc finger occupies 133 to 211 (GKTAQIRVPA…CAGQGRVTEE (79 aa)). Positions 146, 149, 163, 166, 185, 188, 199, and 202 each coordinate Zn(2+). CXXCXGXG motif repeat units follow at residues 146–153 (CTECSGSG), 163–170 (CSMCHGHG), 185–192 (CPQCQGRG), and 199–206 (CPKCAGQG).

It belongs to the DnaJ family. Homodimer. Zn(2+) is required as a cofactor.

It localises to the cytoplasm. Functionally, participates actively in the response to hyperosmotic and heat shock by preventing the aggregation of stress-denatured proteins and by disaggregating proteins, also in an autonomous, DnaK-independent fashion. Unfolded proteins bind initially to DnaJ; upon interaction with the DnaJ-bound protein, DnaK hydrolyzes its bound ATP, resulting in the formation of a stable complex. GrpE releases ADP from DnaK; ATP binding to DnaK triggers the release of the substrate protein, thus completing the reaction cycle. Several rounds of ATP-dependent interactions between DnaJ, DnaK and GrpE are required for fully efficient folding. Also involved, together with DnaK and GrpE, in the DNA replication of plasmids through activation of initiation proteins. The protein is Chaperone protein DnaJ of Mesorhizobium japonicum (strain LMG 29417 / CECT 9101 / MAFF 303099) (Mesorhizobium loti (strain MAFF 303099)).